The chain runs to 279 residues: DNA repair protein RecO (279 aa).

The protein belongs to the RecO family.

Its function is as follows. Involved in DNA repair and RecF pathway recombination. This chain is DNA repair protein RecO, found in Thermosynechococcus vestitus (strain NIES-2133 / IAM M-273 / BP-1).